The chain runs to 361 residues: Tyrosine--tRNA ligase (361 aa).

Positions 36, 162, 166, 169, and 184 each coordinate L-tyrosine. The 'KMSKS' region signature appears at lysine 236–serine 240. Lysine 239 is an ATP binding site.

Belongs to the class-I aminoacyl-tRNA synthetase family. TyrS type 4 subfamily. In terms of assembly, homodimer.

It localises to the cytoplasm. It carries out the reaction tRNA(Tyr) + L-tyrosine + ATP = L-tyrosyl-tRNA(Tyr) + AMP + diphosphate + H(+). Functionally, catalyzes the attachment of tyrosine to tRNA(Tyr) in a two-step reaction: tyrosine is first activated by ATP to form Tyr-AMP and then transferred to the acceptor end of tRNA(Tyr). This Saccharolobus islandicus (strain L.S.2.15 / Lassen #1) (Sulfolobus islandicus) protein is Tyrosine--tRNA ligase.